Reading from the N-terminus, the 411-residue chain is Probable 26S proteasome regulatory subunit rpn-6.2 (411 aa).

In terms of domain architecture, PCI spans 212–381; that stretch reads YKTSFSYFYE…DTVVIYPKAG (170 aa).

This sequence belongs to the proteasome subunit S9 family. In terms of assembly, component of the lid subcomplex of the 19S proteasome regulatory particle complex (also named PA700 complex). The 26S proteasome consists of a 20S proteasome core and two 19S regulatory subunits.

Functionally, component of the lid subcomplex of the 26S proteasome, a multiprotein complex involved in the ATP-dependent degradation of ubiquitinated proteins. In the complex, rpn-6.2 is required for proteasome assembly. The polypeptide is Probable 26S proteasome regulatory subunit rpn-6.2 (Caenorhabditis briggsae).